Here is a 619-residue protein sequence, read N- to C-terminus: Kinesin light chain 4 (619 aa).

At Ser2 the chain carries N-acetylserine. One copy of the TPR 1 repeat lies at 55–88; sequence QQGGHEEGLVHEKARQLRRSMENIELGLSEAQVM. Residues 65–155 are a coiled coil; it reads HEKARQLRRS…HLEFLRQLRQ (91 aa). Residues 156 to 175 show a composition bias toward basic and acidic residues; it reads YDEDGHGMEEKEGEATKDSL. Residues 156–199 form a disordered region; sequence YDEDGHGMEEKEGEATKDSLDDLFPNEEEEDSGNDLSRGQGAAA. Ser174 carries the phosphoserine modification. Acidic residues predominate over residues 179 to 188; the sequence is FPNEEEEDSG. TPR repeat units lie at residues 211–244, 253–286, 295–328, 337–370, and 379–412; these read LRTLHNLVIQYAAQGRYEVAVPLCKQALEDLERT, ATMLNILALVYRDQNKYKEAAHLLNDALSIREST, AATLNNLAVLYGKRGKYKEAEPLCQRALEIREKV, AKQLNNLALLCQNQGKYEAVERYYQRALAIYESQ, and ARTKNNLASCYLKQGKYSEAEALYKEILTCAHVQ. The residue at position 460 (Ser460) is a Phosphoserine. One copy of the TPR 7 repeat lies at 464–497; the sequence is NTTLKNLGALYRRQGKLEAAETLEECALRSRKQG. 3 positions are modified to phosphoserine: Ser565, Ser566, and Ser590. Residues 571–619 are disordered; the sequence is RKLQGTEPRPSSSSMKRAASLNYLNQPNAAPLQVSRGLSASTVDLSSSS. Over residues 609-619 the composition is skewed to low complexity; sequence SASTVDLSSSS. A Phosphothreonine modification is found at Thr612.

Belongs to the kinesin light chain family. As to quaternary structure, oligomeric complex composed of two heavy chains and two light chains.

It is found in the cytoplasm. The protein localises to the cytoskeleton. Kinesin is a microtubule-associated force-producing protein that may play a role in organelle transport. The light chain may function in coupling of cargo to the heavy chain or in the modulation of its ATPase activity. The sequence is that of Kinesin light chain 4 (Klc4) from Mus musculus (Mouse).